The sequence spans 462 residues: dTDP-4-dehydro-2,6-dideoxy-D-glucose 3-dehydratase (462 aa).

Residues 112–113, Asp220, and Ser241 each bind pyridoxal 5'-phosphate; that span reads GS. Catalysis depends on His246, which acts as the Proton donor/acceptor. Asn314 serves as a coordination point for pyridoxal 5'-phosphate.

Belongs to the DegT/DnrJ/EryC1 family. In terms of assembly, homodimer. The cofactor is pyridoxal 5'-phosphate.

It carries out the reaction dTDP-4-dehydro-2,6-dideoxy-alpha-D-glucose + 2 reduced [2Fe-2S]-[ferredoxin] + 2 H(+) = dTDP-4-dehydro-2,3,6-trideoxy-alpha-D-hexopyranose + 2 oxidized [2Fe-2S]-[ferredoxin] + H2O. In terms of biological role, involved in the biosynthesis of forosamine ((4-dimethylamino)-2,3,4,6-tetradeoxy-alpha-D-threo-hexopyranose), a highly deoxygenated sugar component of several bioactive natural products such as the insecticidal spinosyns A and D. Catalyzes C-3 deoxygenation of dTDP-4-keto-2,6-dideoxy-alpha-D-glucose to yield dTDP-4-keto-2,3,6-trideoxy-D-glucose via a combined transamination-deoxygenation reaction. The catalysis is initiated by a transamination step in which pyridoxal 5'-phosphate (PLP) is converted to pyridoxamine 5'-phosphate (PMP) in the presence of L-glutamate. This coenzyme then forms a Schiff base with dTDP-4-keto-2,6-dideoxy-alpha-D-glucose and the resulting adduct undergoes a PMP-mediated beta-dehydration reaction to give a sugar enamine intermediate, which after a 2 electrons reduction and hydrolysis yields dTDP-4-keto-2,3,6-trideoxy-D-glucose as a product. Requires cellular reductase (ferredoxin or flavodoxin reductase) rather than a specific partner reductase. L-glutamate is 20-fold more efficient than L-aspartate as an amino donor. In the absence of an electron source and in the presence of L-glutamate, catalyzes a transamination reaction, converting dTDP-4-keto-2,6-dideoxy-alpha-D-glucose to dTDP-4-amino-2,4,6-trideoxy-D-glucose. The sequence is that of dTDP-4-dehydro-2,6-dideoxy-D-glucose 3-dehydratase from Saccharopolyspora spinosa.